A 221-amino-acid polypeptide reads, in one-letter code: Urease accessory protein UreE (221 aa).

Over residues 171–180 (HHGHDHDHGH) the composition is skewed to basic and acidic residues. The disordered stretch occupies residues 171-221 (HHGHDHDHGHSHSHSHSHSHSHSHSHDHDHDHDHEHDVKGHVHGPGCGHKH). Positions 181–193 (SHSHSHSHSHSHS) are enriched in basic residues. Residues 194 to 210 (HSHDHDHDHDHEHDVKG) show a composition bias toward basic and acidic residues.

This sequence belongs to the UreE family.

The protein localises to the cytoplasm. In terms of biological role, involved in urease metallocenter assembly. Binds nickel. Probably functions as a nickel donor during metallocenter assembly. This is Urease accessory protein UreE from Cupriavidus pinatubonensis (strain JMP 134 / LMG 1197) (Cupriavidus necator (strain JMP 134)).